The sequence spans 321 residues: Ribose-phosphate pyrophosphokinase C (321 aa).

2 residues coordinate Mg(2+): aspartate 132 and aspartate 147. The interval 214-229 (SGKVAIIIGSIADTCE) is binding of phosphoribosylpyrophosphate.

The protein belongs to the ribose-phosphate pyrophosphokinase family. It depends on Mg(2+) as a cofactor.

The protein localises to the cytoplasm. It catalyses the reaction D-ribose 5-phosphate + ATP = 5-phospho-alpha-D-ribose 1-diphosphate + AMP + H(+). The protein operates within metabolic intermediate biosynthesis; 5-phospho-alpha-D-ribose 1-diphosphate biosynthesis; 5-phospho-alpha-D-ribose 1-diphosphate from D-ribose 5-phosphate (route I): step 1/1. The sequence is that of Ribose-phosphate pyrophosphokinase C (prsC) from Dictyostelium discoideum (Social amoeba).